The following is a 184-amino-acid chain: ATP synthase subunit b (184 aa).

The helical transmembrane segment at 4 to 24 (LSVLFALVASPALAASGPFFS) threads the bilayer.

The protein belongs to the ATPase B chain family. F-type ATPases have 2 components, F(1) - the catalytic core - and F(0) - the membrane proton channel. F(1) has five subunits: alpha(3), beta(3), gamma(1), delta(1), epsilon(1). F(0) has three main subunits: a(1), b(2) and c(10-14). The alpha and beta chains form an alternating ring which encloses part of the gamma chain. F(1) is attached to F(0) by a central stalk formed by the gamma and epsilon chains, while a peripheral stalk is formed by the delta and b chains.

The protein localises to the cell inner membrane. F(1)F(0) ATP synthase produces ATP from ADP in the presence of a proton or sodium gradient. F-type ATPases consist of two structural domains, F(1) containing the extramembraneous catalytic core and F(0) containing the membrane proton channel, linked together by a central stalk and a peripheral stalk. During catalysis, ATP synthesis in the catalytic domain of F(1) is coupled via a rotary mechanism of the central stalk subunits to proton translocation. In terms of biological role, component of the F(0) channel, it forms part of the peripheral stalk, linking F(1) to F(0). The sequence is that of ATP synthase subunit b from Paracoccus denitrificans (strain Pd 1222).